We begin with the raw amino-acid sequence, 531 residues long: Bifunctional protein TrpGD (531 aa).

The Glutamine amidotransferase type-1 domain occupies 3–196 (DILLLDNIDS…LAWAQQKLEP (194 aa)). 57–59 (GPG) is an L-glutamine binding site. C84 serves as the catalytic Nucleophile; for GATase activity. Residues Q88 and 134–135 (SL) each bind L-glutamine. Residues H170 and E172 each act as for GATase activity in the active site. Positions 202–531 (PILEKLYQAQ…DRVTALAARG (330 aa)) are anthranilate phosphoribosyltransferase.

The protein in the C-terminal section; belongs to the anthranilate phosphoribosyltransferase family. In terms of assembly, heterotetramer consisting of two non-identical subunits: a beta subunit (TrpG) and a large alpha subunit (TrpE).

The catalysed reaction is chorismate + L-glutamine = anthranilate + pyruvate + L-glutamate + H(+). It catalyses the reaction N-(5-phospho-beta-D-ribosyl)anthranilate + diphosphate = 5-phospho-alpha-D-ribose 1-diphosphate + anthranilate. The protein operates within amino-acid biosynthesis; L-tryptophan biosynthesis; L-tryptophan from chorismate: step 1/5. Its pathway is amino-acid biosynthesis; L-tryptophan biosynthesis; L-tryptophan from chorismate: step 2/5. With respect to regulation, cooperatively feedback inhibited by tryptophan. Part of a heterotetrameric complex that catalyzes the two-step biosynthesis of anthranilate, an intermediate in the biosynthesis of L-tryptophan. In the first step, the glutamine-binding beta subunit (TrpG) of anthranilate synthase (AS) provides the glutamine amidotransferase activity which generates ammonia as a substrate that, along with chorismate, is used in the second step, catalyzed by the large alpha subunit of AS (TrpE) to produce anthranilate. In the absence of TrpG, TrpE can synthesize anthranilate directly from chorismate and high concentrations of ammonia. In addition to synthesizing anthranilate, it also catalyzes the second step of the pathway, the transfer of the phosphoribosyl group of 5-phosphorylribose-1-pyrophosphate (PRPP) to anthranilate. The polypeptide is Bifunctional protein TrpGD (trpGD) (Escherichia coli (strain K12)).